A 498-amino-acid chain; its full sequence is XK-related protein 4 (498 aa).

The tract at residues 24–46 (SEHSGSVQGLHPGAQPDSAGAGD) is disordered. 2 consecutive transmembrane segments (helical) span residues 81 to 101 (CLWI…DVWL) and 111 to 131 (YWWF…VQLF). The disordered stretch occupies residues 166-203 (SHGDVTAQHHPATPQRQASTASRNTTTNSTASTGLGPR). Positions 183–198 (ASTASRNTTTNSTAST) are enriched in low complexity. The next 2 membrane-spanning stretches (helical) occupy residues 302 to 322 (LFIY…LWYL) and 332 to 352 (FAVP…VFML).

Belongs to the XK family.

The protein localises to the cell membrane. The enzyme catalyses a 1,2-diacyl-sn-glycero-3-phospho-L-serine(in) = a 1,2-diacyl-sn-glycero-3-phospho-L-serine(out). Phospholipid scramblase that promotes phosphatidylserine exposure on apoptotic cell surface. Phosphatidylserine is a specific marker only present at the surface of apoptotic cells and acts as a specific signal for engulfment. In Tetraodon nigroviridis (Spotted green pufferfish), this protein is XK-related protein 4.